Here is a 621-residue protein sequence, read N- to C-terminus: Proton pump-interactor BIP131 (621 aa).

Residues 250–305 adopt a coiled-coil conformation; that stretch reads IDEVKRDRQAVRDKIKVLEDQIHAVDGEIAALQDDLTAATARKDKAFEALNELRKT. The span at 374 to 387 shows a compositional bias: basic and acidic residues; that stretch reads SRDGRMRNPDEKPI. Positions 374–572 are disordered; sequence SRDGRMRNPD…RSTVTKTKTP (199 aa). Over residues 430–441 the composition is skewed to low complexity; sequence KAPAKAAKAKQP. The segment covering 448–516 has biased composition (basic and acidic residues); it reads PDVHDDEPPK…AEKKLKEKEK (69 aa). Positions 466 to 524 form a coiled coil; sequence EAKLKEMKRQEEIEKNKLALERKKKQAEKQAMKAAARAEKEAEKKLKEKEKKARKRSAT. Residues 589-609 form a helical membrane-spanning segment; that stretch reads WGAPMAALAAALVALLGALVY.

This sequence belongs to the plant proton pump-interactor protein family. In terms of assembly, interacts with BRI1.

Its subcellular location is the cell membrane. Functionally, may regulate plasma membrane ATPase activity. This is Proton pump-interactor BIP131 from Oryza sativa subsp. japonica (Rice).